The primary structure comprises 176 residues: Tubulin polymerization-promoting protein family member 3 (176 aa).

Alanine 2 bears the N-acetylalanine mark.

Belongs to the TPPP family.

The protein resides in the cytoplasm. Its subcellular location is the cytoskeleton. Functionally, regulator of microtubule dynamic that has microtubule bundling activity. Required for embryo implantation; possibly by regulating beta-catenin. Also required for decidualization via regulation of beta-catenin. The sequence is that of Tubulin polymerization-promoting protein family member 3 (TPPP3) from Bos taurus (Bovine).